The primary structure comprises 652 residues: Acetyl-coenzyme A synthetase (652 aa).

CoA is bound by residues 191-194 (RAGN) and Thr-311. ATP-binding positions include 387 to 389 (GEP), 411 to 416 (DTWWQT), Asp-503, and Arg-518. Ser-526 contacts CoA. Arg-529 lines the ATP pocket. Mg(2+)-binding residues include Val-540, His-542, and Val-545. Arg-587 contacts CoA. The residue at position 613 (Lys-613) is an N6-acetyllysine.

It belongs to the ATP-dependent AMP-binding enzyme family. It depends on Mg(2+) as a cofactor. Post-translationally, acetylated. Deacetylation by the SIR2-homolog deacetylase activates the enzyme.

The enzyme catalyses acetate + ATP + CoA = acetyl-CoA + AMP + diphosphate. Functionally, catalyzes the conversion of acetate into acetyl-CoA (AcCoA), an essential intermediate at the junction of anabolic and catabolic pathways. AcsA undergoes a two-step reaction. In the first half reaction, AcsA combines acetate with ATP to form acetyl-adenylate (AcAMP) intermediate. In the second half reaction, it can then transfer the acetyl group from AcAMP to the sulfhydryl group of CoA, forming the product AcCoA. The protein is Acetyl-coenzyme A synthetase of Marinomonas sp. (strain MWYL1).